The sequence spans 745 residues: Cullin-2 (745 aa).

At Lys393 the chain carries N6-acetyllysine. Residue Thr661 is modified to Phosphothreonine. Residues 675 to 735 (DRKMYLQAAI…IDKQYIERSQ (61 aa)) form the Cullin neddylation domain. Residue Lys689 forms a Glycyl lysine isopeptide (Lys-Gly) (interchain with G-Cter in NEDD8) linkage.

The protein belongs to the cullin family. Component of multiple Cul2-RING (CRL2) E3 ubiquitin-protein ligase complexes consisting of CUL2, Elongin BC (ELOB and ELOC), RBX1 and a variable substrate-specific adapter; this complex is also known as ECS (Elongin BC-CUL2/5-SOCS-box protein) complex and may consist of CUL2 or CUL5. Component of the ECS(VHL) or CBC(VHL) complex containing CUL2, RBX1, ELOB, ELOC and VHL. Component of the ECS(MED8) complex with the probable substrate recognition component MED8. Component of multiple ECS complexes part of the DesCEND (destruction via C-end degrons) pathway, which contain either KLHDC2, KLHDC3, KLHDC10, APPBP2, FEM1A, FEM1B or FEM1C as substrate-recognition component. Component of the ECS(LRR1) complex with the substrate recognition component LRR1. Component of a CRL2(FEM1B) complex containing CUL2, RBX1, ELOB, ELOC and FEM1B. Component of a CRL2(FEM1C) complex containing CUL2, RBX1, ELOB, ELOC and FEM1C. Part of an E3 ubiquitin-protein ligase complex including ZYG11B, CUL2 and Elongin BC. Part of an E3 ubiquitin-protein ligase complex including ZER1, CUL2 and Elongin BC. Interacts with RBX1, RNF7, FEM1B and TIP120A/CAND1. Found in a complex composed of LIMD1, VHL, EGLN1/PHD2, ELOB and CUL2. Interacts (when neddylated) with ARIH1; leading to activate the E3 ligase activity of ARIH1. Interacts (unneddylated form) with DCUN1D1, DCUN1D2, DCUN1D3, DCUN1D4 and DCUN1D5; these interactions promote the cullin neddylation. Component of VCB (elongins BC/CUL2/VHL) complex that contains at least DCUN1D1, CUL2 and VHL; this complex triggers CUL2 neddylation and consequently cullin ring ligase (CRL) substrates polyubiquitylation. In terms of processing, neddylated; which enhances the ubiquitination activity of ECS (Elongin BC-CUL2/5-SOCS-box protein) E3 ubiquitin-protein ligase complexes. Neddylation leads to structural rearrangment in the complex that allows interaction between the E2 ubiquitin-conjugating enzyme and the acceptor ubiquitin. CBC(VHL) complex formation seems to promote neddylation. Deneddylated via its interaction with the COP9 signalosome (CSN) complex.

The protein resides in the nucleus. The protein operates within protein modification; protein ubiquitination. Its function is as follows. Core component of multiple cullin-RING-based ECS (ElonginB/C-CUL2/5-SOCS-box protein) E3 ubiquitin-protein ligase complexes, which mediate the ubiquitination of target proteins. CUL2 may serve as a rigid scaffold in the complex and may contribute to catalysis through positioning of the substrate and the ubiquitin-conjugating enzyme. The E3 ubiquitin-protein ligase activity of the complex is dependent on the neddylation of the cullin subunit and is inhibited by the association of the deneddylated cullin subunit with TIP120A/CAND1. The functional specificity of the ECS complex depends on the substrate recognition component. ECS(VHL) mediates the ubiquitination of hypoxia-inducible factor (HIF). A number of ECS complexes (containing either KLHDC2, KLHDC3, KLHDC10, APPBP2, FEM1A, FEM1B or FEM1C as substrate-recognition component) are part of the DesCEND (destruction via C-end degrons) pathway, which recognizes a C-degron located at the extreme C terminus of target proteins, leading to their ubiquitination and degradation. ECS complexes and ARIH1 collaborate in tandem to mediate ubiquitination of target proteins. ECS(LRR1) ubiquitinates MCM7 and promotes CMG replisome disassembly by VCP and chromatin extraction during S-phase. The polypeptide is Cullin-2 (CUL2) (Pongo abelii (Sumatran orangutan)).